A 188-amino-acid polypeptide reads, in one-letter code: Apolipophorin-3 (188 aa).

Positions 1 to 17 are cleaved as a signal peptide; it reads MVAKLFVLVACIALSHA. The propeptide occupies 18–22; sequence AMVRR.

It belongs to the insect apolipophorin-3 family. As to quaternary structure, equilibrium between a soluble monomer and a bound lipoprotein form. Apolipophorin-3 associates with lipophorin during lipid loading until each particle contains 9 or 14 molecules of apolipophorin-3. In terms of tissue distribution, expressed in fat body and secreted in hemolymph. Also expressed in ovary and testis at lower levels.

The protein resides in the secreted. Functionally, assists in the loading of diacylglycerol, generated from triacylglycerol stores in the fat body through the action of adipokinetic hormone, into lipophorin, the hemolymph lipoprotein. It increases the lipid carrying capacity of lipophorin by covering the expanding hydrophobic surface resulting from diacylglycerol uptake. It thus plays a critical role in the transport of lipids during flight in several species of insects. This Spodoptera litura (Asian cotton leafworm) protein is Apolipophorin-3.